The following is a 362-amino-acid chain: Cobalt-precorrin-5B C(1)-methyltransferase (362 aa).

This sequence belongs to the CbiD family.

It carries out the reaction Co-precorrin-5B + S-adenosyl-L-methionine = Co-precorrin-6A + S-adenosyl-L-homocysteine. Its pathway is cofactor biosynthesis; adenosylcobalamin biosynthesis; cob(II)yrinate a,c-diamide from sirohydrochlorin (anaerobic route): step 6/10. Its function is as follows. Catalyzes the methylation of C-1 in cobalt-precorrin-5B to form cobalt-precorrin-6A. This chain is Cobalt-precorrin-5B C(1)-methyltransferase, found in Methanocaldococcus jannaschii (strain ATCC 43067 / DSM 2661 / JAL-1 / JCM 10045 / NBRC 100440) (Methanococcus jannaschii).